We begin with the raw amino-acid sequence, 264 residues long: 3-methyl-2-oxobutanoate hydroxymethyltransferase (264 aa).

Positions 45 and 84 each coordinate Mg(2+). 3-methyl-2-oxobutanoate contacts are provided by residues 45-46 (DS), aspartate 84, and lysine 112. Glutamate 114 provides a ligand contact to Mg(2+). Glutamate 181 acts as the Proton acceptor in catalysis.

It belongs to the PanB family. As to quaternary structure, homodecamer; pentamer of dimers. Mg(2+) is required as a cofactor.

The protein resides in the cytoplasm. It catalyses the reaction 3-methyl-2-oxobutanoate + (6R)-5,10-methylene-5,6,7,8-tetrahydrofolate + H2O = 2-dehydropantoate + (6S)-5,6,7,8-tetrahydrofolate. It functions in the pathway cofactor biosynthesis; (R)-pantothenate biosynthesis; (R)-pantoate from 3-methyl-2-oxobutanoate: step 1/2. In terms of biological role, catalyzes the reversible reaction in which hydroxymethyl group from 5,10-methylenetetrahydrofolate is transferred onto alpha-ketoisovalerate to form ketopantoate. The polypeptide is 3-methyl-2-oxobutanoate hydroxymethyltransferase (Aliivibrio fischeri (strain MJ11) (Vibrio fischeri)).